The primary structure comprises 340 residues: Phosphate acyltransferase (340 aa).

It belongs to the PlsX family. In terms of assembly, homodimer. Probably interacts with PlsY.

It localises to the cytoplasm. It carries out the reaction a fatty acyl-[ACP] + phosphate = an acyl phosphate + holo-[ACP]. Its pathway is lipid metabolism; phospholipid metabolism. Functionally, catalyzes the reversible formation of acyl-phosphate (acyl-PO(4)) from acyl-[acyl-carrier-protein] (acyl-ACP). This enzyme utilizes acyl-ACP as fatty acyl donor, but not acyl-CoA. The polypeptide is Phosphate acyltransferase (Marinobacter nauticus (strain ATCC 700491 / DSM 11845 / VT8) (Marinobacter aquaeolei)).